A 252-amino-acid chain; its full sequence is Triosephosphate isomerase (252 aa).

10–12 is a binding site for substrate; sequence NWK. The Electrophile role is filled by histidine 96. Glutamate 168 serves as the catalytic Proton acceptor. Substrate-binding positions include glycine 174, serine 214, and 235-236; that span reads GG.

This sequence belongs to the triosephosphate isomerase family. As to quaternary structure, homodimer.

The protein resides in the cytoplasm. The enzyme catalyses D-glyceraldehyde 3-phosphate = dihydroxyacetone phosphate. The protein operates within carbohydrate biosynthesis; gluconeogenesis. Its pathway is carbohydrate degradation; glycolysis; D-glyceraldehyde 3-phosphate from glycerone phosphate: step 1/1. Involved in the gluconeogenesis. Catalyzes stereospecifically the conversion of dihydroxyacetone phosphate (DHAP) to D-glyceraldehyde-3-phosphate (G3P). The sequence is that of Triosephosphate isomerase from Streptococcus pyogenes serotype M2 (strain MGAS10270).